We begin with the raw amino-acid sequence, 327 residues long: Methionyl-tRNA formyltransferase (327 aa).

121–124 (SLLP) serves as a coordination point for (6S)-5,6,7,8-tetrahydrofolate.

Belongs to the Fmt family.

It catalyses the reaction L-methionyl-tRNA(fMet) + (6R)-10-formyltetrahydrofolate = N-formyl-L-methionyl-tRNA(fMet) + (6S)-5,6,7,8-tetrahydrofolate + H(+). In terms of biological role, attaches a formyl group to the free amino group of methionyl-tRNA(fMet). The formyl group appears to play a dual role in the initiator identity of N-formylmethionyl-tRNA by promoting its recognition by IF2 and preventing the misappropriation of this tRNA by the elongation apparatus. This Burkholderia vietnamiensis (strain G4 / LMG 22486) (Burkholderia cepacia (strain R1808)) protein is Methionyl-tRNA formyltransferase.